The sequence spans 269 residues: Thiazole synthase (269 aa).

The Schiff-base intermediate with DXP role is filled by Lys95. Residues Gly156, 182-183 (AG), and 204-205 (NT) contribute to the 1-deoxy-D-xylulose 5-phosphate site.

This sequence belongs to the ThiG family. In terms of assembly, homotetramer. Forms heterodimers with either ThiH or ThiS.

It localises to the cytoplasm. It catalyses the reaction [ThiS sulfur-carrier protein]-C-terminal-Gly-aminoethanethioate + 2-iminoacetate + 1-deoxy-D-xylulose 5-phosphate = [ThiS sulfur-carrier protein]-C-terminal Gly-Gly + 2-[(2R,5Z)-2-carboxy-4-methylthiazol-5(2H)-ylidene]ethyl phosphate + 2 H2O + H(+). It participates in cofactor biosynthesis; thiamine diphosphate biosynthesis. Functionally, catalyzes the rearrangement of 1-deoxy-D-xylulose 5-phosphate (DXP) to produce the thiazole phosphate moiety of thiamine. Sulfur is provided by the thiocarboxylate moiety of the carrier protein ThiS. In vitro, sulfur can be provided by H(2)S. The sequence is that of Thiazole synthase from Shewanella frigidimarina (strain NCIMB 400).